Consider the following 556-residue polypeptide: MTSDIEIARAATLKPMAAIAARLGIPDEAIIPFGRSKAKLSGDFIATLKDRPRGKLILVTAISPTPAGEGKTTTTVGLGDGLSRIGKKVAICLREPSLGPCFGMKGGAAGGGMAQVVPMEDINLHFTGDFHAITSAHNLLAALIDNHVHWGNEQQIDSRRIALRRVLDMNDRSLRNLVTGLGGPAHGTPREGGFDITVASEVMAILCLARDLADLEERLGDIVIAERADRSRVTARDIGAAGAMTVLLKDAFQPNLVQTLEHTPTFIHGGPFANIAHGCNTLVATDTALRLADYVVTEAGFGADLGAEKFFDIKCRKGGLEPSAAVLVATIRALKMNGGVPKDQLGAENVAAVEAGCANLGRHIENLAKFGVPVVVAINHFTADSEAEVAAVEAFCEARGVKAVLATHWAEGGQGTQKLAEAVSELVEGGSSRFAPLYPDDMPLVDKIETVAQSIYRAGSVVFERSARLQLERWQEAGYGHLPVCMAKTQYSFSADPALTGAPEGHELPVREVRLSAGAGFVVAVCGAIMTMPGLPRKPAALDIHLNAEGEVEGLF.

65–72 (TPAGEGKT) is a binding site for ATP.

This sequence belongs to the formate--tetrahydrofolate ligase family.

The enzyme catalyses (6S)-5,6,7,8-tetrahydrofolate + formate + ATP = (6R)-10-formyltetrahydrofolate + ADP + phosphate. Its pathway is one-carbon metabolism; tetrahydrofolate interconversion. The sequence is that of Formate--tetrahydrofolate ligase from Maricaulis maris (strain MCS10) (Caulobacter maris).